The sequence spans 211 residues: Glial cell line-derived neurotrophic factor (211 aa).

A signal peptide spans 1-19 (MKLWDVVAVCLVLLHTASA). Positions 20–75 (FPLPAGKRLLEAPAEDHSLGHRRVPFALTSDSNMPEDYPDQFDDVMDFIQATIKRL) are excised as a propeptide. The segment at 76-113 (KRSPDKQAAALPRRERNRQAAAASPENSRGKGRRGQRG) is disordered. 3 disulfide bridges follow: cysteine 118–cysteine 179, cysteine 145–cysteine 208, and cysteine 149–cysteine 210. 2 N-linked (GlcNAc...) asparagine glycosylation sites follow: asparagine 126 and asparagine 162.

The protein belongs to the TGF-beta family. GDNF subfamily. As to quaternary structure, homodimer; disulfide-linked. Interacts with GFRA1 coreceptor and RET: forms a 2:2:2 ternary complex composed of GDNF ligand, GFRA1 and RET receptor. Interacts (via propeptide) with SORL1 (via N-terminal ectodomain); this interaction affects GDNF-regulated, but not constitutive secretion. Also interacts with SORL1 in complex with GFRA1; this interaction leads to GDNF endocytosis and lysosomal degradation. As to expression, expressed in both the central nervous system (CNS) and in non-CNS tissues, including the kidney, lung, bone, heart, liver, spleen, sciatic nerve and blood. Expressed in brain (at protein level). Localizes at the proximal ligature of the hypoglossal nerve.

It is found in the secreted. Neurotrophic factor that enhances survival and morphological differentiation of dopaminergic neurons and increases their high-affinity dopamine uptake. Acts by binding to its coreceptor, GFRA1, leading to autophosphorylation and activation of the RET receptor. May also modulate local neuronal effects in distal regions of the motor neuron. Involved in the development of the neural crest. The sequence is that of Glial cell line-derived neurotrophic factor (Gdnf) from Rattus norvegicus (Rat).